A 316-amino-acid chain; its full sequence is HPr kinase/phosphorylase (316 aa).

Active-site residues include His146 and Lys167. 161 to 168 contributes to the ATP binding site; that stretch reads GESGLGKS. Mg(2+) is bound at residue Ser168. Asp185 (proton acceptor; for phosphorylation activity. Proton donor; for dephosphorylation activity) is an active-site residue. The interval 209 to 218 is important for the catalytic mechanism of both phosphorylation and dephosphorylation; the sequence is LEVRGIGLLD. Glu210 contacts Mg(2+). Arg252 is a catalytic residue. The important for the catalytic mechanism of dephosphorylation stretch occupies residues 273 to 278; that stretch reads QVEAGR.

The protein belongs to the HPrK/P family. In terms of assembly, homohexamer. It depends on Mg(2+) as a cofactor.

The catalysed reaction is [HPr protein]-L-serine + ATP = [HPr protein]-O-phospho-L-serine + ADP + H(+). It carries out the reaction [HPr protein]-O-phospho-L-serine + phosphate + H(+) = [HPr protein]-L-serine + diphosphate. Catalyzes the ATP- as well as the pyrophosphate-dependent phosphorylation of a specific serine residue in HPr, a phosphocarrier protein of the phosphoenolpyruvate-dependent sugar phosphotransferase system (PTS). HprK/P also catalyzes the pyrophosphate-producing, inorganic phosphate-dependent dephosphorylation (phosphorolysis) of seryl-phosphorylated HPr (P-Ser-HPr). The sequence is that of HPr kinase/phosphorylase from Polaromonas sp. (strain JS666 / ATCC BAA-500).